The primary structure comprises 120 residues: UPF0344 protein LMOf2365_2298 (120 aa).

Transmembrane regions (helical) follow at residues 3–23 (GYIH…ALLI), 33–53 (MLQM…IMMV), 62–82 (ILAI…EMLL), and 92–112 (GMFL…GFYL).

It belongs to the UPF0344 family.

It localises to the cell membrane. This is UPF0344 protein LMOf2365_2298 from Listeria monocytogenes serotype 4b (strain F2365).